The following is a 221-amino-acid chain: Serine/arginine-rich splicing factor 2 (221 aa).

S2 is subject to N-acetylserine. Residue S2 is modified to Phosphoserine. Residues 14 to 92 (TSLKVDNLTY…RELRVQMARY (79 aa)) enclose the RRM domain. 2 positions are modified to phosphothreonine: T22 and T25. S26 is modified (phosphoserine). The residue at position 52 (K52) is an N6-acetyllysine. Residues 92–221 (YGRPPDSHHS…SPEEEGAVSS (130 aa)) form a disordered region. Composition is skewed to basic residues over residues 117–171 (RRSR…RSKS) and 179–189 (SRSRSRSRSRS). Phosphoserine is present on residues S189, S191, S204, S206, S208, S212, and S220.

Belongs to the splicing factor SR family. Interacts with CCNL1 and CCNL2. Interacts with SCAF11. Interacts with ZRSR2/U2AF1-RS2. Interacts with CCDC55 (via C-terminus). In vitro, self-associates and binds SRSF1/SFRS1 (ASF/SF2), SNRNP70 and U2AF1 but not U2AF2. Binds SREK1/SFRS12. Interacts with BRDT. Post-translationally, extensively phosphorylated on serine residues in the RS domain. Phosphorylated by SRPK2 and this causes its redistribution from the nuclear speckle to nucleoplasm and controls cell fate decision in response to cisplatin treatment. KAT5/TIP60 inhibits its phosphorylation by preventing SRPK2 nuclear translocation. In terms of processing, acetylation on Lys-52 by KAT5/TIP60 promotes its proteasomal degradation. This effect is counterbalanced by HDAC6, which positively controls SRSF2 protein level by deacetylating it and preventing its proteasomal degradation. As to expression, expressed in all the tissues examined; liver, kidney, spleen, heart, lung and brain.

The protein resides in the nucleus. It is found in the nucleoplasm. It localises to the nucleus speckle. Functionally, necessary for the splicing of pre-mRNA. It is required for formation of the earliest ATP-dependent splicing complex and interacts with spliceosomal components bound to both the 5'- and 3'-splice sites during spliceosome assembly. It also is required for ATP-dependent interactions of both U1 and U2 snRNPs with pre-mRNA. Can bind to the myelin basic protein (MBP) gene MB3 regulatory region and increase transcription of the mbp promoter in cells derived from the CNS. The phosphorylated form (by SRPK2) is required for cellular apoptosis in response to cisplatin treatment. This chain is Serine/arginine-rich splicing factor 2 (Srsf2), found in Mus musculus (Mouse).